The following is a 248-amino-acid chain: MSHTAKMASTFNNFYEISNVEVGQHFYWQLGSFQVHAQVLITSWIVIAILLSLAVLATRNLQTIPMGGQNFVEYVLEFIRDLTRTQIGEEEYRPWVPFIGTMFLFIFVSNWSGALFPWRVFELPNGELAAPTNDINTTVALALLTSVAYFYAGLHKKGLSYFGKYIQPTPVLLPINILEDFTKPLSLSFRLFGNILADELVVAVLISLVPLVVPIPMMFLGLFTSAIQALIFATLAAAYIGESMEGHH.

A run of 5 helical transmembrane segments spans residues 37–57, 96–116, 135–155, 200–220, and 221–241; these read AQVL…AVLA, VPFI…GALF, INTT…AGLH, LVVA…MMFL, and GLFT…AYIG.

The protein belongs to the ATPase A chain family. F-type ATPases have 2 components, CF(1) - the catalytic core - and CF(0) - the membrane proton channel. CF(1) has five subunits: alpha(3), beta(3), gamma(1), delta(1), epsilon(1). CF(0) has four main subunits: a, b, b' and c.

The protein resides in the plastid. Its subcellular location is the chloroplast thylakoid membrane. Key component of the proton channel; it plays a direct role in the translocation of protons across the membrane. This Marchantia polymorpha (Common liverwort) protein is ATP synthase subunit a, chloroplastic.